Here is a 551-residue protein sequence, read N- to C-terminus: Adenylyl cyclase-associated protein (551 aa).

Residues Ser-34–Asn-55 form a disordered region. Phosphoserine is present on Ser-92. The residue at position 96 (Thr-96) is a Phosphothreonine. Over residues Ser-288–Ser-300 the composition is skewed to polar residues. 2 disordered regions span residues Ser-288–Asp-333 and Thr-348–Pro-395. The segment covering Leu-305 to Ser-315 has biased composition (pro residues). Residues Arg-352 to His-361 are compositionally biased toward basic and acidic residues. The C-CAP/cofactor C-like domain occupies Pro-395–Val-529.

Belongs to the CAP family.

The N-terminal domain binds to adenylyl cyclase, thereby enabling adenylyl cyclase to be activated by upstream regulatory signals, such as Ras. The C-terminal domain is required for normal cellular morphology and growth control. In Schizosaccharomyces pombe (strain 972 / ATCC 24843) (Fission yeast), this protein is Adenylyl cyclase-associated protein (cap1).